A 426-amino-acid chain; its full sequence is Glutamate-1-semialdehyde 2,1-aminomutase (426 aa).

Position 265 is an N6-(pyridoxal phosphate)lysine (Lys265).

This sequence belongs to the class-III pyridoxal-phosphate-dependent aminotransferase family. HemL subfamily. As to quaternary structure, homodimer. Requires pyridoxal 5'-phosphate as cofactor.

The protein localises to the cytoplasm. It catalyses the reaction (S)-4-amino-5-oxopentanoate = 5-aminolevulinate. Its pathway is porphyrin-containing compound metabolism; protoporphyrin-IX biosynthesis; 5-aminolevulinate from L-glutamyl-tRNA(Glu): step 2/2. The chain is Glutamate-1-semialdehyde 2,1-aminomutase from Actinobacillus pleuropneumoniae serotype 7 (strain AP76).